Consider the following 221-residue polypeptide: Phosphatidylserine decarboxylase proenzyme (221 aa).

S189 functions as the Schiff-base intermediate with substrate; via pyruvic acid in the catalytic mechanism. S189 is subject to Pyruvic acid (Ser); by autocatalysis.

The protein belongs to the phosphatidylserine decarboxylase family. PSD-A subfamily. In terms of assembly, heterodimer of a large membrane-associated beta subunit and a small pyruvoyl-containing alpha subunit. Pyruvate serves as cofactor. Is synthesized initially as an inactive proenzyme. Formation of the active enzyme involves a self-maturation process in which the active site pyruvoyl group is generated from an internal serine residue via an autocatalytic post-translational modification. Two non-identical subunits are generated from the proenzyme in this reaction, and the pyruvate is formed at the N-terminus of the alpha chain, which is derived from the carboxyl end of the proenzyme. The post-translation cleavage follows an unusual pathway, termed non-hydrolytic serinolysis, in which the side chain hydroxyl group of the serine supplies its oxygen atom to form the C-terminus of the beta chain, while the remainder of the serine residue undergoes an oxidative deamination to produce ammonia and the pyruvoyl prosthetic group on the alpha chain.

The protein resides in the cell membrane. It carries out the reaction a 1,2-diacyl-sn-glycero-3-phospho-L-serine + H(+) = a 1,2-diacyl-sn-glycero-3-phosphoethanolamine + CO2. The protein operates within phospholipid metabolism; phosphatidylethanolamine biosynthesis; phosphatidylethanolamine from CDP-diacylglycerol: step 2/2. Its function is as follows. Catalyzes the formation of phosphatidylethanolamine (PtdEtn) from phosphatidylserine (PtdSer). This is Phosphatidylserine decarboxylase proenzyme from Porphyromonas gingivalis (strain ATCC 33277 / DSM 20709 / CIP 103683 / JCM 12257 / NCTC 11834 / 2561).